Consider the following 501-residue polypeptide: Myrosinase MA1 (501 aa).

Disulfide bonds link Cys6–Cys438, Cys14–Cys434, and Cys206–Cys214. N-linked (GlcNAc...) asparagine glycosylation occurs at Asn21. Residue Gln39 coordinates substrate. Position 56 (His56) interacts with Zn(2+). The N-linked (GlcNAc...) asparagine glycan is linked to Asn60. Asp70 is a Zn(2+) binding site. A glycan (N-linked (GlcNAc...) asparagine) is linked at Asn90. Residues His141 and Asn186 each contribute to the substrate site. Gln187 provides a ligand contact to L-ascorbate. Asn218 and Asn244 each carry an N-linked (GlcNAc...) asparagine glycan. Arg259 provides a ligand contact to L-ascorbate. N-linked (GlcNAc...) asparagine glycans are attached at residues Asn265 and Asn292. Residue Tyr330 coordinates substrate. Asn343, Asn346, and Asn361 each carry an N-linked (GlcNAc...) asparagine glycan. Glu409 (nucleophile) is an active-site residue. Substrate contacts are provided by residues Trp457 and Glu464–Phe465. The N-linked (GlcNAc...) asparagine glycan is linked to Asn482.

The protein belongs to the glycosyl hydrolase 1 family. In terms of assembly, homodimer. In vacuoles called myrosin grains of a certain class of cells, myrosin cells, distributed in the cotyledons and the axis of the embryo as well as in different organs of the growing plant.

It localises to the vacuole. It catalyses the reaction a thioglucoside + H2O = a sugar + a thiol.. Degradation of glucosinolates (glucose residue linked by a thioglucoside bound to an amino acid derivative) to glucose, sulfate and any of the products: thiocyanates, isothiocyanates, nitriles, epithionitriles or oxazolidine-2-thiones. The chain is Myrosinase MA1 from Sinapis alba (White mustard).